Reading from the N-terminus, the 468-residue chain is Chromosomal replication initiator protein DnaA (468 aa).

Residues 1–84 (MSSSLWLQCL…RFEVGSRPVA (84 aa)) form a domain I, interacts with DnaA modulators region. Residues 81 to 104 (RPVAAPKPAPTRTPADVAAESSAP) are disordered. Residues 84 to 131 (AAPKPAPTRTPADVAAESSAPAQLQARKPVHKTWDDDAQAIADINHRS) form a domain II region. Positions 132-348 (NVNPKHKFNN…GALNRVIANA (217 aa)) are domain III, AAA+ region. ATP contacts are provided by Gly-176, Gly-178, Lys-179, and Thr-180. The domain IV, binds dsDNA stretch occupies residues 349–468 (NFTGRPITID…YSNLIRTLSS (120 aa)).

It belongs to the DnaA family. In terms of assembly, oligomerizes as a right-handed, spiral filament on DNA at oriC.

It localises to the cytoplasm. In terms of biological role, plays an essential role in the initiation and regulation of chromosomal replication. ATP-DnaA binds to the origin of replication (oriC) to initiate formation of the DNA replication initiation complex once per cell cycle. Binds the DnaA box (a 9 base pair repeat at the origin) and separates the double-stranded (ds)DNA. Forms a right-handed helical filament on oriC DNA; dsDNA binds to the exterior of the filament while single-stranded (ss)DNA is stabiized in the filament's interior. The ATP-DnaA-oriC complex binds and stabilizes one strand of the AT-rich DNA unwinding element (DUE), permitting loading of DNA polymerase. After initiation quickly degrades to an ADP-DnaA complex that is not apt for DNA replication. Binds acidic phospholipids. The polypeptide is Chromosomal replication initiator protein DnaA (Vibrio campbellii (strain ATCC BAA-1116)).